Reading from the N-terminus, the 353-residue chain is Quinolinate synthase (353 aa).

Iminosuccinate-binding residues include histidine 47 and serine 68. Cysteine 113 serves as a coordination point for [4Fe-4S] cluster. Iminosuccinate contacts are provided by residues 139–141 (YAN) and serine 156. [4Fe-4S] cluster is bound at residue cysteine 200. Residues 226–228 (HPE) and threonine 243 contribute to the iminosuccinate site. Residue cysteine 297 participates in [4Fe-4S] cluster binding.

The protein belongs to the quinolinate synthase family. Type 1 subfamily. It depends on [4Fe-4S] cluster as a cofactor.

The protein resides in the cytoplasm. The enzyme catalyses iminosuccinate + dihydroxyacetone phosphate = quinolinate + phosphate + 2 H2O + H(+). It functions in the pathway cofactor biosynthesis; NAD(+) biosynthesis; quinolinate from iminoaspartate: step 1/1. Catalyzes the condensation of iminoaspartate with dihydroxyacetone phosphate to form quinolinate. This is Quinolinate synthase from Vibrio vulnificus (strain YJ016).